Here is an 865-residue protein sequence, read N- to C-terminus: Protein translocase subunit SecA (865 aa).

ATP-binding positions include Gln93, Gly111–Thr115, and Asp501. Residues Cys841, Cys843, Cys852, and Cys853 each contribute to the Zn(2+) site.

Belongs to the SecA family. In terms of assembly, monomer and homodimer. Part of the essential Sec protein translocation apparatus which comprises SecA, SecYEG and auxiliary proteins SecDF-YajC and YidC. Zn(2+) is required as a cofactor.

The protein resides in the cell inner membrane. It is found in the cytoplasm. The enzyme catalyses ATP + H2O + cellular proteinSide 1 = ADP + phosphate + cellular proteinSide 2.. Part of the Sec protein translocase complex. Interacts with the SecYEG preprotein conducting channel. Has a central role in coupling the hydrolysis of ATP to the transfer of proteins into and across the cell membrane, serving as an ATP-driven molecular motor driving the stepwise translocation of polypeptide chains across the membrane. This Helicobacter pylori (strain Shi470) protein is Protein translocase subunit SecA.